The primary structure comprises 556 residues: MGVCCSCFKRYEHDQSYPPLLAENEREAISSLLQYLENRSEVDFFTDGPLRALSTLVYSENIDLQRSAALAFAEVTEKDVRPVTRDVLEPILILLQSSDAEVQRAACAALGNLAVNDSNKVLIVNMGGLEPLIRQMMSPNIEVQCNAVGCITNLATQDQNKSKIATSGALIPLTKLAKSKDLRVQRNATGALLNMTHSLENRQELVNAGSVPILVQLLSSTDPDVQYYCTTALSNIAVDEGNRKKLASTEPKLISQLVQLMDSTSPRVQCQATLALRNLASDANYQLEIVRAGGLPNLVTLLNSTHQPLVLAAVACIRNISIHPLNEALIIDAGFLKPLVSLLDYNDNVEIQCHAVSTLRNLAASSERNRLALLESGAVEKCEKLVLNSPISVQSEISACFAILALADDLKMKLLDSNIIEVLLPLTSSENGEVCGNAAAALANLCSRIPDYTIILKNYEQISKFIAKFLNSQNPTFEHIALWTTLQLLESEDETIKAKLKKQINSGEISLNNLTTSTLNNHSDTSNIINNDGEEGEFNDGDDIINLTQQILEMIK.

Gly-2 carries the N-myristoyl glycine lipid modification. S-palmitoyl cysteine attachment occurs at residues Cys-4, Cys-5, and Cys-7. ARM repeat units follow at residues 38–74, 75–115, 117–156, 158–197, 199–238, 242–281, 283–322, 324–364, and 408–447; these read NRSE…AFAE, VTEK…NLAV, DSNK…NLAT, DQNK…NMTH, LENR…NIAV, NRKK…NLAS, ANYQ…NISI, PLNE…NLAA, and DDLK…NLCS.

It belongs to the beta-catenin family.

It localises to the vacuole membrane. Its function is as follows. Functions in both vacuole inheritance and protein targeting from the cytoplasm to vacuole. The protein is Vacuolar protein 8 (VAC8) of Komagataella pastoris (Yeast).